Here is an 851-residue protein sequence, read N- to C-terminus: Meiotically up-regulated gene 87 protein (851 aa).

It belongs to the nucleoporin interacting component (NIC) family.

Its subcellular location is the nucleus envelope. Its function is as follows. Has a role in meiosis. The sequence is that of Meiotically up-regulated gene 87 protein (mug87) from Schizosaccharomyces pombe (strain 972 / ATCC 24843) (Fission yeast).